The sequence spans 452 residues: UDP-N-acetylmuramoyl-tripeptide--D-alanyl-D-alanine ligase (452 aa).

Position 113–119 (113–119 (GSNGKTT)) interacts with ATP.

It belongs to the MurCDEF family. MurF subfamily.

The protein resides in the cytoplasm. The enzyme catalyses UDP-N-acetyl-alpha-D-muramoyl-L-alanyl-gamma-D-glutamyl-L-lysine + D-alanyl-D-alanine + ATP = UDP-N-acetyl-alpha-D-muramoyl-L-alanyl-gamma-D-glutamyl-L-lysyl-D-alanyl-D-alanine + ADP + phosphate + H(+). It participates in cell wall biogenesis; peptidoglycan biosynthesis. Involved in cell wall formation. Catalyzes the final step in the synthesis of UDP-N-acetylmuramoyl-pentapeptide, the precursor of murein. Catalyzes the addition of D-alanyl-D-alanine to UDP-MurNAc-L-alanyl-gamma-D-glutamyl-L-lysine. In vitro, can also use the mesodiaminopimelic acid-containing form of UDP-MurNAc-tripeptide, with the same efficiency, revealing that the discrimination for the amino acid residue at the third position of the peptide in the peptidoglycans is entirely supported by MurE. In Staphylococcus aureus (strain NCTC 8325 / PS 47), this protein is UDP-N-acetylmuramoyl-tripeptide--D-alanyl-D-alanine ligase.